The primary structure comprises 399 residues: Succinate--CoA ligase [ADP-forming] subunit beta (399 aa).

The ATP-grasp domain maps to 9-254; that stretch reads KAVLKSFGAP…TTEEDEKEIE (246 aa). ATP-binding positions include Lys46, 53–55, Glu109, Ala112, and Glu117; that span reads GRG. Positions 209 and 223 each coordinate Mg(2+). Residues Asn274 and 331–333 each bind substrate; that span reads GIM.

The protein belongs to the succinate/malate CoA ligase beta subunit family. In terms of assembly, heterotetramer of two alpha and two beta subunits. Requires Mg(2+) as cofactor.

It catalyses the reaction succinate + ATP + CoA = succinyl-CoA + ADP + phosphate. The catalysed reaction is GTP + succinate + CoA = succinyl-CoA + GDP + phosphate. The protein operates within carbohydrate metabolism; tricarboxylic acid cycle; succinate from succinyl-CoA (ligase route): step 1/1. Succinyl-CoA synthetase functions in the citric acid cycle (TCA), coupling the hydrolysis of succinyl-CoA to the synthesis of either ATP or GTP and thus represents the only step of substrate-level phosphorylation in the TCA. The beta subunit provides nucleotide specificity of the enzyme and binds the substrate succinate, while the binding sites for coenzyme A and phosphate are found in the alpha subunit. The polypeptide is Succinate--CoA ligase [ADP-forming] subunit beta (Maricaulis maris (strain MCS10) (Caulobacter maris)).